Consider the following 96-residue polypeptide: Small ribosomal subunit protein uS19 (96 aa).

It belongs to the universal ribosomal protein uS19 family.

Functionally, protein S19 forms a complex with S13 that binds strongly to the 16S ribosomal RNA. This is Small ribosomal subunit protein uS19 from Koribacter versatilis (strain Ellin345).